The chain runs to 193 residues: Adenine phosphoribosyltransferase (193 aa).

Belongs to the purine/pyrimidine phosphoribosyltransferase family. In terms of assembly, homodimer.

It is found in the cytoplasm. The enzyme catalyses AMP + diphosphate = 5-phospho-alpha-D-ribose 1-diphosphate + adenine. It participates in purine metabolism; AMP biosynthesis via salvage pathway; AMP from adenine: step 1/1. In terms of biological role, catalyzes a salvage reaction resulting in the formation of AMP, that is energically less costly than de novo synthesis. This Bifidobacterium longum subsp. infantis (strain ATCC 15697 / DSM 20088 / JCM 1222 / NCTC 11817 / S12) protein is Adenine phosphoribosyltransferase.